Here is a 387-residue protein sequence, read N- to C-terminus: TSC22 domain family protein 4 (387 aa).

2 disordered regions span residues 1–85 (MSGG…GEPY) and 135–232 (ISTP…RRDG). The span at 31–51 (PVPPALAGPPPRLPNGDPNPD) shows a compositional bias: pro residues. The residue at position 57 (T57) is a Phosphothreonine. Phosphoserine is present on residues S62 and S165. T183 carries the phosphothreonine modification. 3 positions are modified to phosphoserine: S187, S189, and S219. A Phosphothreonine modification is found at T223. Phosphoserine occurs at positions 254, 258, and 271. A leucine-zipper region spans residues 336–357 (LKEQIRDLAERNAALEQENGLL). S362 carries the post-translational modification Phosphoserine. A disordered region spans residues 368–387 (QLPSSGLPRLGPSAPNGPSI).

Belongs to the TSC-22/Dip/Bun family. In terms of assembly, forms a homodimer or heterodimer. Forms a heterodimer with TSC22D1 isoforms 1 and 2. Interacts with NRBP1. In terms of tissue distribution, expressed in the liver (at protein level). Expressed in Purkinje cells and proliferating cerebellar granular neurons (at protein level). Expressed in the cortex, medulla and papilla of the kidney.

Its subcellular location is the nucleus. It localises to the cytoplasm. The protein resides in the cell projection. It is found in the dendrite. The protein localises to the synapse. Binds DNA and acts as a transcriptional repressor. Involved in the regulation of systematic glucose homeostasis and insulin sensitivity, via transcriptional repression of downstream insulin signaling targets such as OBP2A/LCN13. Acts as a negative regulator of lipogenic gene expression in hepatocytes and thereby mediates the control of very low-density lipoprotein release. May play a role in neurite elongation and survival. This Mus musculus (Mouse) protein is TSC22 domain family protein 4.